Here is a 236-residue protein sequence, read N- to C-terminus: Diaminopimelate epimerase (236 aa).

Substrate-binding residues include N8 and N55. The active-site Proton donor is C64. Substrate is bound by residues 65-66 (GN), N159, and 176-177 (ER). Catalysis depends on C186, which acts as the Proton acceptor. Substrate is bound at residue 187–188 (GT).

Belongs to the diaminopimelate epimerase family. In terms of assembly, probably forms homotrimers.

It is found in the cytoplasm. It carries out the reaction (2S,6S)-2,6-diaminopimelate = meso-2,6-diaminopimelate. The protein operates within amino-acid biosynthesis; L-lysine biosynthesis via DAP pathway; DL-2,6-diaminopimelate from LL-2,6-diaminopimelate: step 1/1. In terms of biological role, catalyzes the stereoinversion of LL-2,6-diaminopimelate (L,L-DAP) to meso-diaminopimelate (meso-DAP), a precursor of L-lysine and an essential component of the bacterial peptidoglycan. Also catalyzes the racemization of certain amino acids, including Lys, with low efficiency. The chain is Diaminopimelate epimerase from Thermotoga maritima (strain ATCC 43589 / DSM 3109 / JCM 10099 / NBRC 100826 / MSB8).